A 143-amino-acid polypeptide reads, in one-letter code: Type II secretion system core protein G (143 aa).

The propeptide at 1–17 (MIKRSITRSPSRAGQAG) is leader sequence. Methionine 18 is subject to N-methylmethionine. The helical transmembrane segment at 18 to 38 (MSLLEIIIVIVLIGAVLTLVG) threads the bilayer.

The protein belongs to the GSP G family. Type II secretion system is composed of four main components: the outer membrane complex, the inner membrane complex, the cytoplasmic secretion ATPase and the periplasm-spanning pseudopilus. Forms homomultimers. Interacts with pseudopilin tip complex component XpsJ as well as XpsI and XcpH. Interacts with XpsN and secretin XpsD. Post-translationally, cleaved by the prepilin peptidase. In terms of processing, methylated by prepilin peptidase at the amino group of the N-terminal methionine once the leader sequence is cleaved.

The protein resides in the cell inner membrane. Its function is as follows. Core component of the type II secretion system required for the energy-dependent secretion of extracellular factors such as proteases and toxins from the periplasm. Pseudopilin (pilin-like) protein that polymerizes to form the pseudopilus. Further polymerization triggers pseudopilus growth. This chain is Type II secretion system core protein G (xpsG), found in Xanthomonas campestris pv. campestris (strain ATCC 33913 / DSM 3586 / NCPPB 528 / LMG 568 / P 25).